Consider the following 515-residue polypeptide: 2-isopropylmalate synthase (515 aa).

Residues 4–266 enclose the Pyruvate carboxyltransferase domain; it reads IKIFDTTLRD…ETGLILKETK (263 aa). Mn(2+) is bound by residues Asp13, His201, His203, and Asn237. Residues 392-515 form a regulatory domain region; sequence KLIQFGVSYD…ANLTRLVYES (124 aa).

Belongs to the alpha-IPM synthase/homocitrate synthase family. LeuA type 1 subfamily. Homodimer. Mn(2+) is required as a cofactor.

It localises to the cytoplasm. It catalyses the reaction 3-methyl-2-oxobutanoate + acetyl-CoA + H2O = (2S)-2-isopropylmalate + CoA + H(+). It functions in the pathway amino-acid biosynthesis; L-leucine biosynthesis; L-leucine from 3-methyl-2-oxobutanoate: step 1/4. Its function is as follows. Catalyzes the condensation of the acetyl group of acetyl-CoA with 3-methyl-2-oxobutanoate (2-ketoisovalerate) to form 3-carboxy-3-hydroxy-4-methylpentanoate (2-isopropylmalate). In Oceanobacillus iheyensis (strain DSM 14371 / CIP 107618 / JCM 11309 / KCTC 3954 / HTE831), this protein is 2-isopropylmalate synthase.